Reading from the N-terminus, the 198-residue chain is IMP cyclohydrolase (198 aa).

The protein belongs to the archaeal IMP cyclohydrolase family.

The catalysed reaction is IMP + H2O = 5-formamido-1-(5-phospho-D-ribosyl)imidazole-4-carboxamide. Its pathway is purine metabolism; IMP biosynthesis via de novo pathway; IMP from 5-formamido-1-(5-phospho-D-ribosyl)imidazole-4-carboxamide: step 1/1. Its function is as follows. Catalyzes the cyclization of 5-formylamidoimidazole-4-carboxamide ribonucleotide to IMP. The polypeptide is IMP cyclohydrolase (Methanopyrus kandleri (strain AV19 / DSM 6324 / JCM 9639 / NBRC 100938)).